Here is a 193-residue protein sequence, read N- to C-terminus: Acyl carrier protein phosphodiesterase (193 aa).

It belongs to the AcpH family.

It carries out the reaction holo-[ACP] + H2O = apo-[ACP] + (R)-4'-phosphopantetheine + H(+). Converts holo-ACP to apo-ACP by hydrolytic cleavage of the phosphopantetheine prosthetic group from ACP. This Salmonella agona (strain SL483) protein is Acyl carrier protein phosphodiesterase.